The chain runs to 130 residues: Small ribosomal subunit protein uS11 (130 aa).

This sequence belongs to the universal ribosomal protein uS11 family. As to quaternary structure, part of the 30S ribosomal subunit. Interacts with proteins S7 and S18. Binds to IF-3.

Located on the platform of the 30S subunit, it bridges several disparate RNA helices of the 16S rRNA. Forms part of the Shine-Dalgarno cleft in the 70S ribosome. The protein is Small ribosomal subunit protein uS11 of Kosmotoga olearia (strain ATCC BAA-1733 / DSM 21960 / TBF 19.5.1).